A 263-amino-acid chain; its full sequence is MAVGKNKGLSKGGKKGVKKKIVDPFTRKDWYDVKAPSMFATRQIGKTLVNRTQGTKIASEGLKYRVFEVSLADLQNDNDAERSFRKFRLIAEDVQGRNVLTNFHGMDLTTDKLRSMVKKWQTLIEANVDVKTTDGYLLRVFCIGFTNKDQMSQRKTCYAQHTQVRAIRKKMVEIITRDVTSSDLKEVVNKLLPDSIAKDIEKACQGIYPLHDVYIRKVKVLKKPRFELSKLLELHGDGKGGSDEPGARVDRPEGYEPPVQETV.

Residues 236–254 (GDGKGGSDEPGARVDRPEG) are compositionally biased toward basic and acidic residues. Positions 236 to 263 (GDGKGGSDEPGARVDRPEGYEPPVQETV) are disordered.

Belongs to the eukaryotic ribosomal protein eS1 family. In terms of assembly, component of the small ribosomal subunit. Mature ribosomes consist of a small (40S) and a large (60S) subunit. The 40S subunit contains about 33 different proteins and 1 molecule of RNA (18S). The 60S subunit contains about 49 different proteins and 3 molecules of RNA (28S, 5.8S and 5S).

Its subcellular location is the cytoplasm. This is Small ribosomal subunit protein eS1 from Periplaneta americana (American cockroach).